A 240-amino-acid chain; its full sequence is Ribonuclease PH (240 aa).

Residues Arg86 and 124 to 126 (GTR) contribute to the phosphate site.

Belongs to the RNase PH family. Homohexameric ring arranged as a trimer of dimers.

The enzyme catalyses tRNA(n+1) + phosphate = tRNA(n) + a ribonucleoside 5'-diphosphate. Functionally, phosphorolytic 3'-5' exoribonuclease that plays an important role in tRNA 3'-end maturation. Removes nucleotide residues following the 3'-CCA terminus of tRNAs; can also add nucleotides to the ends of RNA molecules by using nucleoside diphosphates as substrates, but this may not be physiologically important. Probably plays a role in initiation of 16S rRNA degradation (leading to ribosome degradation) during starvation. This chain is Ribonuclease PH, found in Mannheimia succiniciproducens (strain KCTC 0769BP / MBEL55E).